The following is a 210-amino-acid chain: Glutathione S-transferase P 10 (210 aa).

The 80-residue stretch at 2–81 folds into the GST N-terminal domain; that stretch reads AVPQLYYFTI…HLGRVHGLNG (80 aa). Glutathione contacts are provided by residues Tyr-8, Trp-41, Lys-45, 52-53, and 65-66; these read QL and QT. Residues 83 to 200 enclose the GST C-terminal domain; it reads NEQEATFLDM…YLEKRKADKV (118 aa).

The protein belongs to the GST superfamily. Pi family. In terms of assembly, homodimer. As to expression, expressed in cells at the mouth and adjacent to the pharyngeal bulbs of the head and also in the tail.

The catalysed reaction is RX + glutathione = an S-substituted glutathione + a halide anion + H(+). Functionally, conjugation of reduced glutathione to a wide number of exogenous and endogenous hydrophobic electrophiles. Responsible for approximately one-third of 4-hydroxy-2-nonenal conjugation. May play a role in the detoxification of reactive oxygen species produced during pathogenic bacterial infection. The polypeptide is Glutathione S-transferase P 10 (Caenorhabditis elegans).